The sequence spans 559 residues: Tissue-type plasminogen activator (559 aa).

A signal peptide spans 1–17 (MKRELLCVLLLCGLAFP). A propeptide spanning residues 18 to 29 (LPDQGIHGRFRR) is cleaved from the precursor. Positions 30-32 (GAR) are cleaved as a propeptide — removed by plasmin. A Fibronectin type-I domain is found at 36–78 (ATCRDEPTQTTYQQHQSWLRPMLRSSRVEYCRCNSGLVQCHSV). 17 disulfide bridges follow: Cys38/Cys68, Cys66/Cys75, Cys83/Cys94, Cys88/Cys105, Cys107/Cys116, Cys124/Cys205, Cys145/Cys187, Cys176/Cys200, Cys213/Cys294, Cys234/Cys276, Cys265/Cys289, Cys297/Cys428, Cys340/Cys356, Cys348/Cys417, Cys442/Cys516, Cys474/Cys490, and Cys506/Cys534. The segment at 39-49 (RDEPTQTTYQQ) is important for binding to annexin A2. Positions 79–117 (PVRSCSEPRCFNGGTCQQALYFSDFVCQCPDGFVGKRCD) constitute an EGF-like domain. Kringle domains follow at residues 124-205 (CFEE…TPAC) and 213-294 (CYVG…MSPC). Residue Asn149 is glycosylated (N-linked (GlcNAc...) asparagine). The region spanning 309–558 (IKGGLYTDIT…YLDWIHDNMK (250 aa)) is the Peptidase S1 domain. Residues His355 and Asp404 each act as charge relay system in the active site. Asn481 carries an N-linked (GlcNAc...) asparagine glycan. Residue Ser510 is the Charge relay system of the active site.

This sequence belongs to the peptidase S1 family. Heterodimer of chain A and chain B held by a disulfide bond. Binds to fibrin with high affinity. This interaction leads to an increase in the catalytic efficiency of the enzyme due to an increase in affinity for plasminogen. Similarly, binding to heparin increases the activation of plasminogen. Binds to annexin A2, cytokeratin-8, fibronectin and laminin. Binds to mannose receptor and the low-density lipoprotein receptor-related protein (LRP1); these proteins are involved in TPA clearance. Binds LRP1B; binding is followed by internalization and degradation. Forms heterodimer with SERPINA5. Interacts with SERPINE1. In complex with SERPINE1, interacts with SORL1. In terms of processing, the single chain, almost fully active enzyme, can be further processed into a two-chain fully active form by a cleavage after Arg-308 catalyzed by plasmin, tissue kallikrein or factor Xa.

The protein localises to the secreted. It is found in the extracellular space. It carries out the reaction Specific cleavage of Arg-|-Val bond in plasminogen to form plasmin.. Its activity is regulated as follows. Inhibited by SERPINA5. Inhibited by SERPINE1. Converts the abundant, but inactive, zymogen plasminogen to plasmin by hydrolyzing a single Arg-Val bond in plasminogen. By controlling plasmin-mediated proteolysis, it plays an important role in tissue remodeling and degradation, in cell migration and many other physiopathological events. During oocyte activation, plays a role in cortical granule reaction in the zona reaction, which contributes to the block to polyspermy. This is Tissue-type plasminogen activator (Plat) from Mus musculus (Mouse).